A 164-amino-acid chain; its full sequence is Transcriptional regulator MraZ (164 aa).

SpoVT-AbrB domains lie at 7 to 60 and 83 to 126; these read HYTN…EIDG and SEIL…EPGR. The segment at 144 to 164 is disordered; the sequence is QLSARHAAPDAPPLRSHGARE.

It belongs to the MraZ family. Forms oligomers.

The protein localises to the cytoplasm. Its subcellular location is the nucleoid. The sequence is that of Transcriptional regulator MraZ from Methylocella silvestris (strain DSM 15510 / CIP 108128 / LMG 27833 / NCIMB 13906 / BL2).